We begin with the raw amino-acid sequence, 279 residues long: Large ribosomal subunit protein uL2 (279 aa).

A disordered region spans residues Ala-224–Arg-279. Basic residues predominate over residues Val-269 to Arg-279.

Belongs to the universal ribosomal protein uL2 family. Part of the 50S ribosomal subunit. Forms a bridge to the 30S subunit in the 70S ribosome.

Its function is as follows. One of the primary rRNA binding proteins. Required for association of the 30S and 50S subunits to form the 70S ribosome, for tRNA binding and peptide bond formation. It has been suggested to have peptidyltransferase activity; this is somewhat controversial. Makes several contacts with the 16S rRNA in the 70S ribosome. This is Large ribosomal subunit protein uL2 from Cereibacter sphaeroides (strain ATCC 17029 / ATH 2.4.9) (Rhodobacter sphaeroides).